A 671-amino-acid chain; its full sequence is Zinc finger and BTB domain-containing protein 16-A (671 aa).

The region spanning 34-96 is the BTB domain; that stretch reads CDVVIMVDSQ…AYTATLQAKV (63 aa). Disordered stretches follow at residues 130–167 and 248–289; these read ENDTEVNMNDGGTEDDEERKGRHGRNLVGSKKHSTEES and VDES…RSSV. Positions 270–279 are enriched in basic and acidic residues; sequence RSGEPDKNRD. The residue at position 283 (Thr-283) is a Phosphothreonine. 9 consecutive C2H2-type zinc fingers follow at residues 401-423, 429-451, 458-480, 487-509, 515-537, 544-566, 572-594, 600-622, and 628-650; these read ERCNVCGAELPDNEAIEQHRKLH, YGCELCGKRFLDSLRLRMHLLSH, IVCDQCGAQFQKEDALEAHRQIH, IFCLLCGKRFQTQTALQQHMEVH, YICSECNRTFPSHTALKRHLRSH, FECEFCGSCFRDESTLKGHKRIH, YECNGCGKKFSLKHQLETHYRVH, FECKLCHQRSRDYSAMIKHLRTH, and YQCTICLEYCPSLSAMQKHMKGH.

It belongs to the krueppel C2H2-type zinc-finger protein family. In terms of assembly, interacts with btbd6a (via BTB domain). Post-translationally, polyubiquitinated, leading to its proteasomal degradation. During early stages of primary neurogenesis, expressed in the neural epithelium, with highest levels in the forebrain and midbrain. Also expressed in a posterior-to-anterior gradient in the caudal neural plate at the 3-6 somite stage.

Its subcellular location is the nucleus. It is found in the cytoplasm. It functions in the pathway protein modification; protein ubiquitination. In terms of biological role, probable transcription factor. Probable substrate-recognition component of an E3 ubiquitin-protein ligase complex which mediates the ubiquitination and subsequent proteasomal degradation of target proteins. Inhibits neurogenesis. The chain is Zinc finger and BTB domain-containing protein 16-A from Danio rerio (Zebrafish).